The sequence spans 334 residues: Fructose-1,6-bisphosphatase class 1 (334 aa).

Residues Glu-89, Asp-112, Leu-114, and Asp-115 each coordinate Mg(2+). Residues 115-118, Asn-208, Tyr-241, and Lys-271 contribute to the substrate site; that span reads DGSS. Position 277 (Glu-277) interacts with Mg(2+).

Belongs to the FBPase class 1 family. As to quaternary structure, homotetramer. Requires Mg(2+) as cofactor.

Its subcellular location is the cytoplasm. It carries out the reaction beta-D-fructose 1,6-bisphosphate + H2O = beta-D-fructose 6-phosphate + phosphate. Its pathway is carbohydrate biosynthesis; gluconeogenesis. The polypeptide is Fructose-1,6-bisphosphatase class 1 (Photorhabdus laumondii subsp. laumondii (strain DSM 15139 / CIP 105565 / TT01) (Photorhabdus luminescens subsp. laumondii)).